A 278-amino-acid chain; its full sequence is Shikimate dehydrogenase (NADP(+)) (278 aa).

Shikimate-binding positions include 18–20 (SRS) and Thr-65. Lys-69 serves as the catalytic Proton acceptor. NADP(+) is bound at residue Glu-80. 2 residues coordinate shikimate: Asn-89 and Asp-104. NADP(+) contacts are provided by residues 129–133 (GAGGS) and Leu-218. Tyr-220 is a shikimate binding site. Gly-241 provides a ligand contact to NADP(+).

This sequence belongs to the shikimate dehydrogenase family. Homodimer.

The enzyme catalyses shikimate + NADP(+) = 3-dehydroshikimate + NADPH + H(+). The protein operates within metabolic intermediate biosynthesis; chorismate biosynthesis; chorismate from D-erythrose 4-phosphate and phosphoenolpyruvate: step 4/7. Its function is as follows. Involved in the biosynthesis of the chorismate, which leads to the biosynthesis of aromatic amino acids. Catalyzes the reversible NADPH linked reduction of 3-dehydroshikimate (DHSA) to yield shikimate (SA). This chain is Shikimate dehydrogenase (NADP(+)), found in Rhodopseudomonas palustris (strain TIE-1).